The following is a 457-amino-acid chain: Probable mitochondrial-processing peptidase subunit beta (457 aa).

Zn(2+) is bound at residue His66. The active-site Proton acceptor is Glu69. Zn(2+) is bound by residues His70 and Glu146.

This sequence belongs to the peptidase M16 family. Heterodimer of mas2 (alpha) and qcr1 (beta) subunits, forming the mitochondrial processing protease (MPP) in which mas2 is involved in substrate recognition and binding and qcr1 is the catalytic subunit. Requires Zn(2+) as cofactor.

Its subcellular location is the mitochondrion matrix. It catalyses the reaction Release of N-terminal transit peptides from precursor proteins imported into the mitochondrion, typically with Arg in position P2.. With respect to regulation, binding to mas2 is required for catalytic activity. In terms of biological role, catalytic subunit of the essential mitochondrial processing protease (MPP), which cleaves the mitochondrial sequence off newly imported precursors proteins. Preferentially, cleaves after an arginine at position P2. The polypeptide is Probable mitochondrial-processing peptidase subunit beta (qcr1) (Schizosaccharomyces pombe (strain 972 / ATCC 24843) (Fission yeast)).